The sequence spans 524 residues: Cysteine--tRNA ligase (524 aa).

Cys-29 is a Zn(2+) binding site. The short motif at 31-41 (PTVQAAPHVGH) is the 'HIGH' region element. Residues Cys-207, His-232, and Glu-236 each coordinate Zn(2+). The span at 246–258 (ARPASNAASADSP) shows a compositional bias: low complexity. Residues 246–273 (ARPASNAASADSPGPGGGEPGGGEPSSG) form a disordered region. Gly residues predominate over residues 259 to 270 (GPGGGEPGGGEP). The 'KMSKS' region signature appears at 291–295 (KMSKS). Lys-294 provides a ligand contact to ATP.

The protein belongs to the class-I aminoacyl-tRNA synthetase family. In terms of assembly, monomer. It depends on Zn(2+) as a cofactor.

It localises to the cytoplasm. The enzyme catalyses tRNA(Cys) + L-cysteine + ATP = L-cysteinyl-tRNA(Cys) + AMP + diphosphate. In Frankia casuarinae (strain DSM 45818 / CECT 9043 / HFP020203 / CcI3), this protein is Cysteine--tRNA ligase.